Here is a 33-residue protein sequence, read N- to C-terminus: Ferredoxin (33 aa).

The region spanning 3–33 (KYKVRLLSEAEGIDVTIDSADDVYILDAAEE) is the 2Fe-2S ferredoxin-type domain.

This sequence belongs to the 2Fe2S plant-type ferredoxin family. [2Fe-2S] cluster is required as a cofactor.

Its subcellular location is the plastid. It localises to the chloroplast. In terms of biological role, ferredoxins are iron-sulfur proteins that transfer electrons in a wide variety of metabolic reactions. In Porphyridium aerugineum (Red microalga), this protein is Ferredoxin.